We begin with the raw amino-acid sequence, 354 residues long: Protein RecA (354 aa).

Residue 68–75 participates in ATP binding; the sequence is GPESSGKT.

The protein belongs to the RecA family.

Its subcellular location is the cytoplasm. Its function is as follows. Can catalyze the hydrolysis of ATP in the presence of single-stranded DNA, the ATP-dependent uptake of single-stranded DNA by duplex DNA, and the ATP-dependent hybridization of homologous single-stranded DNAs. It interacts with LexA causing its activation and leading to its autocatalytic cleavage. The protein is Protein RecA of Synechocystis sp. (strain ATCC 27184 / PCC 6803 / Kazusa).